Consider the following 875-residue polypeptide: Outer membrane usher protein FocD (875 aa).

Positions 1 to 38 are cleaved as a signal peptide; the sequence is MFFGDGGQLLSDKSLTGSAGGGNNRMKFNILPLAFFIG. Cys-852 and Cys-874 are joined by a disulfide.

This sequence belongs to the fimbrial export usher family.

Its subcellular location is the cell outer membrane. In terms of biological role, involved in the export and assembly of the F1C fimbriae subunits across the outer membrane. The polypeptide is Outer membrane usher protein FocD (focD) (Escherichia coli).